The sequence spans 300 residues: MTDFLDTDYTQRFIFDDSDTRGELVSLERSYAEVLAKHPYPEPVAQLLGELMAAASLLVGTLKFDGLLILQARSEGPIPLLMIECSSEREIRGLARYHAEQIPADATLGDLMPNGVLALTVDPIAGQRYQGIVDLDGETLSDCFTNYFVMSQQVGTRFKLCADGRRARGLLLQQLPADRLKDEEERAASWQHITALGNTLTADELLSLDNETVLHRLYHEEQVRLFDVQKLRFHCSCSRERSGNALVSLGLEDAQALVAEQGGQVEIDCQFCNQRYLFDAADIAQLFAGAGVETPSDTRH.

Cystine bridges form between Cys-235-Cys-237 and Cys-269-Cys-272.

The protein belongs to the HSP33 family. In terms of processing, under oxidizing conditions two disulfide bonds are formed involving the reactive cysteines. Under reducing conditions zinc is bound to the reactive cysteines and the protein is inactive.

Its subcellular location is the cytoplasm. Redox regulated molecular chaperone. Protects both thermally unfolding and oxidatively damaged proteins from irreversible aggregation. Plays an important role in the bacterial defense system toward oxidative stress. The chain is 33 kDa chaperonin from Pseudomonas fluorescens (strain Pf0-1).